The following is a 546-amino-acid chain: Undecaprenyl phosphate-alpha-4-amino-4-deoxy-L-arabinose arabinosyl transferase (546 aa).

12 consecutive transmembrane segments (helical) span residues 6–26 (INLA…PLGL), 87–107 (AASA…VGRF), 113–133 (AWVT…GTYS), 177–197 (LLTK…PFMI), 208–228 (WGWW…LAIH), 260–280 (YYLP…PSAI), 289–309 (SPLL…FSAA), 313–333 (LVTY…QGII), 345–365 (IGSV…IVLF), 380–400 (PWLL…SIKA), 410–430 (YMLM…NISI), and 450–467 (AILI…NWYF).

This sequence belongs to the glycosyltransferase 83 family.

It localises to the cell inner membrane. The catalysed reaction is 4-amino-4-deoxy-alpha-L-arabinopyranosyl di-trans,octa-cis-undecaprenyl phosphate + lipid IVA = lipid IIA + di-trans,octa-cis-undecaprenyl phosphate.. It functions in the pathway lipopolysaccharide metabolism; 4-amino-4-deoxy-beta-L-arabinose-lipid A biosynthesis. Functionally, catalyzes the transfer of the L-Ara4N moiety of the glycolipid undecaprenyl phosphate-alpha-L-Ara4N to lipid A. The modified arabinose is attached to lipid A and is required for resistance to polymyxin and cationic antimicrobial peptides. This Shewanella sediminis (strain HAW-EB3) protein is Undecaprenyl phosphate-alpha-4-amino-4-deoxy-L-arabinose arabinosyl transferase.